The sequence spans 651 residues: Acetyl-coenzyme A synthetase (651 aa).

CoA contacts are provided by residues 191–194, Thr-311, and Asn-335; that span reads RGGK. Residues 387-389, 411-416, Asp-500, and Arg-515 each bind ATP; these read GEP and DTWWQT. Ser-523 is a binding site for CoA. Arg-526 is an ATP binding site. Mg(2+)-binding residues include Val-537, His-539, and Val-542. Arg-584 contributes to the CoA binding site. Lys-609 carries the N6-acetyllysine modification.

It belongs to the ATP-dependent AMP-binding enzyme family. Mg(2+) serves as cofactor. Post-translationally, acetylated. Deacetylation by the SIR2-homolog deacetylase activates the enzyme.

The enzyme catalyses acetate + ATP + CoA = acetyl-CoA + AMP + diphosphate. In terms of biological role, catalyzes the conversion of acetate into acetyl-CoA (AcCoA), an essential intermediate at the junction of anabolic and catabolic pathways. AcsA undergoes a two-step reaction. In the first half reaction, AcsA combines acetate with ATP to form acetyl-adenylate (AcAMP) intermediate. In the second half reaction, it can then transfer the acetyl group from AcAMP to the sulfhydryl group of CoA, forming the product AcCoA. The sequence is that of Acetyl-coenzyme A synthetase from Pseudomonas savastanoi pv. phaseolicola (strain 1448A / Race 6) (Pseudomonas syringae pv. phaseolicola (strain 1448A / Race 6)).